A 930-amino-acid polypeptide reads, in one-letter code: MTELKAKEPRAPHVAGGAPSPTEVGSQLLGRPDPGPFQGSQTSEASSVVSAIPISLDGLLFPRPCQGQNPPDGKTQDPPSLSDVEGAFPGVEAPEGAGDSSSRPPEKDSGLLDSVLDTLLAPSGPGQSHASPATCEAISPWCLFGPDLPEDPRAAPATKGVLAPLMSRPEDKAGDSSGTAAAHKVLPRGLSPSRQLLLPSSGSPHWPAVKPSPQPAAVQVDEEDSSESEGTVGPLLKGQPRALGGTAAGGGAAPVASGAAAGGVALVPKEDSRFSAPRVSLAEQDAPVAPGRSPLATSVVDFIHVPILPLNHAFLATRTRQLLEGESYDGGAAAASPFVPQRGSPSASSTPVAGGDFPDCTYPPDAEPKDDAFPLYGDFQPPALKIKEEEEAAEAAARSPRTYLVAGANPAAFPDFQLAAPPPPSLPPRVPSSRPGEAAVAASPGSASVSSSSSSGSTLECILYKAEGAPPQQGPFAPLPCKPPGAGACLLPRDGLPSTSASGAAAGAAPALYPTLGLNGLPQLGYQAAVLKEGLPQVYTPYLNYLRPDSEASQSPQYSFESLPQKICLICGDEASGCHYGVLTCGSCKVFFKRAMEGQHNYLCAGRNDCIVDKIRRKNCPACRLRKCCQAGMVLGGRKFKKFNKVRVMRALDAVALPQPVGIPNESQRITFSPSQEIQLIPPLINLLMSIEPDVIYAGHDNTKPDTSSSLLTSLNQLGERQLLSVVKWSKSLPGFRNLHIDDQITLIQYSWMSLMVFGLGWRSYKHVSGQMLYFAPDLILNEQRMKESSFYSLCLTMWQIPQEFVKLQVSQEEFLCMKVLLLLNTIPLEGLRSQSQFEEMRSSYIRELIKAIGLRQKGVVSSSQRFYQLTKLLDNLHDLVKQLHLYCLNTFIQSRALSVEFPEMMSEVIAAQLPKILAGMVKPLLFHKK.

Over residues 1–11 (MTELKAKEPRA) the composition is skewed to basic and acidic residues. 2 disordered regions span residues 1-133 (MTEL…ASPA) and 148-260 (LPED…SGAA). The AF3; mediates transcriptional activation stretch occupies residues 1–165 (MTELKAKEPR…PATKGVLAPL (165 aa)). A modulating, Pro-Rich region spans residues 1 to 565 (MTELKAKEPR…PQYSFESLPQ (565 aa)). Lys7 is covalently cross-linked (Glycyl lysine isopeptide (Lys-Gly) (interchain with G-Cter in SUMO)). Ser20 is modified (phosphoserine). Polar residues predominate over residues 38–49 (QGSQTSEASSVV). Residues 56-60 (LDGLL) carry the LXXL motif 1 motif. Ser82 carries the phosphoserine modification. The LXXL motif 2 motif lies at 116–120 (LDTLL). A Phosphoserine modification is found at Ser131. A mediates transcriptional transrepression region spans residues 166–304 (MSRPEDKAGD…LATSVVDFIH (139 aa)). Residues 184–188 (KVLPR) carry the Nuclear localization signal motif. Residues 187–204 (PRGLSPSRQLLLPSSGSP) are compositionally biased toward low complexity. 2 positions are modified to phosphoserine: Ser191 and Ser212. Ser293 carries the phosphoserine; by MAPK1 modification. The tract at residues 334 to 356 (AASPFVPQRGSPSASSTPVAGGD) is disordered. At Ser344 the chain carries Phosphoserine; by MAPK. A Glycyl lysine isopeptide (Lys-Gly) (interchain with G-Cter in SUMO); alternate cross-link involves residue Lys387. Lys387 participates in a covalent cross-link: Glycyl lysine isopeptide (Lys-Gly) (interchain with G-Cter in ubiquitin); alternate. Ser399 is subject to Phosphoserine; by CDK2. Residues 415–454 (DFQLAAPPPPSLPPRVPSSRPGEAAVAASPGSASVSSSSS) are disordered. A compositionally biased stretch (pro residues) spans 420–430 (APPPPSLPPRV). The span at 431–454 (PSSRPGEAAVAASPGSASVSSSSS) shows a compositional bias: low complexity. The tract at residues 457–547 (STLECILYKA…VYTPYLNYLR (91 aa)) is AF1; mediates transcriptional activation. Lys532 participates in a covalent cross-link: Glycyl lysine isopeptide (Lys-Gly) (interchain with G-Cter in SUMO). The nuclear receptor DNA-binding region spans 566 to 640 (KICLICGDEA…AGMVLGGRKF (75 aa)). 2 NR C4-type zinc fingers span residues 568 to 588 (CLIC…CGSC) and 604 to 628 (CAGR…LRKC). Residue Ser673 is modified to Phosphoserine. Residues 676 to 910 (QEIQLIPPLI…EFPEMMSEVI (235 aa)) enclose the NR LBD domain. The interval 684 to 930 (LINLLMSIEP…MVKPLLFHKK (247 aa)) is AF2; mediates transcriptional activation. Arg763 contacts progesterone.

This sequence belongs to the nuclear hormone receptor family. NR3 subfamily. In terms of assembly, interacts with SMARD1 and UNC45A. Interacts with CUEDC2; the interaction promotes ubiquitination, decreases sumoylation, and represses transcriptional activity. Interacts with PIAS3; the interaction promotes sumoylation of PR in a hormone-dependent manner, inhibits DNA-binding, and alters nuclear export. Interacts with SP1; the interaction requires ligand-induced phosphorylation on Ser-344 by ERK1/2-MAPK. Interacts with PRMT2. Interacts with NCOA2 and NCOA1. Interacts with KLF9. Interacts with GTF2B. Phosphorylated on multiple serine sites. Several of these sites are hormone-dependent. Phosphorylation on Ser-293 is highly hormone-dependent and modulates ubiquitination and sumoylation on Lys-387. Phosphorylation on Ser-102 and Ser-344 also requires induction by hormone. Basal phosphorylation on Ser-82, Ser-191 and Ser-399 is increased in response to progesterone and can be phosphorylated in vitro by the CDK2-A1 complex. Increased levels of phosphorylation on Ser-399 also in the presence of EGF, heregulin, IGF, PMA and FBS. Phosphorylation at this site by CDK2 is ligand-independent, and increases nuclear translocation and transcriptional activity. Phosphorylation at Ser-293, but not at Ser-191, is impaired during the G(2)/M phase of the cell cycle. Phosphorylation on Ser-344 by ERK1/2 MAPK is required for interaction with SP1. In terms of processing, sumoylation is hormone-dependent and represses transcriptional activity. Sumoylation on all three sites is enhanced by PIAS3. Desumoylated by SENP1. Sumoylation on Lys-387, the main site of sumoylation, is repressed by ubiquitination on the same site, and modulated by phosphorylation at Ser-293. Post-translationally, ubiquitination is hormone-dependent and represses sumoylation on the same site. Promoted by MAPK-mediated phosphorylation on Ser-293. Ubiquitinated by UBR5, leading to its degradation: UBR5 specifically recognizes and binds ligand-bound PGR when it is not associated with coactivators (NCOAs). In presence of NCOAs, the UBR5-degron is not accessible, preventing its ubiquitination and degradation. Palmitoylated by ZDHHC7 and ZDHHC21. Palmitoylation is required for plasma membrane targeting and for rapid intracellular signaling via ERK and AKT kinases and cAMP generation.

Its subcellular location is the nucleus. It localises to the cytoplasm. Its function is as follows. The steroid hormones and their receptors are involved in the regulation of eukaryotic gene expression and affect cellular proliferation and differentiation in target tissues. Transcriptional activator of several progesteron-dependent promoters in a variety of cell types. Involved in activation of SRC-dependent MAPK signaling on hormone stimulation. This chain is Progesterone receptor (PGR), found in Oryctolagus cuniculus (Rabbit).